The sequence spans 415 residues: Mulatexin (415 aa).

The N-terminal stretch at Met-1–Ala-21 is a signal peptide. The Chitin-binding type-1 1 domain occupies Glu-23–Ser-66. 4 disulfide bridges follow: Cys-26–Cys-41, Cys-35–Cys-47, Cys-40–Cys-54, and Cys-60–Cys-64. A disordered region spans residues Trp-65 to Arg-127. The segment covering Ser-67–Pro-121 has biased composition (pro residues). The Chitin-binding type-1 2 domain occupies Asp-125–Asn-167. 4 disulfides stabilise this stretch: Cys-128/Cys-143, Cys-137/Cys-149, Cys-142/Cys-156, and Cys-161/Cys-165. Asn-264 carries N-linked (GlcNAc...) asparagine glycosylation.

Glycosylated.

The protein resides in the secreted. Its function is as follows. Chitin-binding protein which slows larval growth when consumed by the lepidopteran species S.ricini and M.brassica, but not when consumed by the mulberry specialist B.mori. Lacks chitinase activity. The sequence is that of Mulatexin from Morus alba (White mulberry).